Consider the following 382-residue polypeptide: uncharacterized protein (382 aa).

12 helical membrane passes run 8–28, 39–61, 75–95, 102–122, 131–151, 157–177, 204–224, 236–256, 265–284, 289–311, 325–345, and 349–369; these read VLLL…LNTL, PTWQ…TLLT, YLAS…VGFW, FIAG…LMCS, LLAA…LMIS, LMSV…PLLF, LGVN…GLMP, GIGF…WPIG, LLVL…AMLG, APAL…AWAC, ALLL…AMLM, and SDNL…LMLL.

This sequence belongs to the major facilitator superfamily. YcaD (TC 2.A.1.26) family.

It localises to the cell inner membrane. This is an uncharacterized protein from Enterobacter sp. (strain 638).